The primary structure comprises 256 residues: Spore coat polysaccharide biosynthesis protein SpsA (256 aa).

Cys155 and Cys243 form a disulfide bridge. Asp191 is a catalytic residue.

It belongs to the glycosyltransferase 2 family. Monomer in solution.

Its pathway is spore coat biogenesis; spore coat polysaccharide biosynthesis. In terms of biological role, glycosyltransferase implicated in the synthesis of the spore coat. The protein is Spore coat polysaccharide biosynthesis protein SpsA (spsA) of Bacillus subtilis (strain 168).